Consider the following 178-residue polypeptide: ATP synthase subunit d, mitochondrial (178 aa).

A disordered region spans residues Asn-149 to His-178. Residues Lys-165–His-178 are compositionally biased toward basic and acidic residues.

It belongs to the ATPase d subunit family. As to quaternary structure, F-type ATPases have 2 components, CF(1) - the catalytic core - and CF(0) - the membrane proton channel. CF(0) seems to have nine subunits: a, b, c, d, e, f, g, F6 and 8 (or A6L).

Its subcellular location is the mitochondrion. The protein resides in the mitochondrion inner membrane. Mitochondrial membrane ATP synthase (F(1)F(0) ATP synthase or Complex V) produces ATP from ADP in the presence of a proton gradient across the membrane which is generated by electron transport complexes of the respiratory chain. F-type ATPases consist of two structural domains, F(1) - containing the extramembraneous catalytic core, and F(0) - containing the membrane proton channel, linked together by a central stalk and a peripheral stalk. During catalysis, ATP synthesis in the catalytic domain of F(1) is coupled via a rotary mechanism of the central stalk subunits to proton translocation. Part of the complex F(0) domain and the peripheric stalk, which acts as a stator to hold the catalytic alpha(3)beta(3) subcomplex and subunit a/ATP6 static relative to the rotary elements. This is ATP synthase subunit d, mitochondrial from Drosophila melanogaster (Fruit fly).